The chain runs to 445 residues: N-succinylarginine dihydrolase (445 aa).

Substrate is bound by residues 19-28 (AGLSFGNVAS), Asn110, and 137-138 (HR). Glu174 is a catalytic residue. Arg214 contributes to the substrate binding site. Residue His250 is part of the active site. Substrate-binding residues include Asp252 and Asn363. Cys369 functions as the Nucleophile in the catalytic mechanism.

Belongs to the succinylarginine dihydrolase family. As to quaternary structure, homodimer.

It catalyses the reaction N(2)-succinyl-L-arginine + 2 H2O + 2 H(+) = N(2)-succinyl-L-ornithine + 2 NH4(+) + CO2. Its pathway is amino-acid degradation; L-arginine degradation via AST pathway; L-glutamate and succinate from L-arginine: step 2/5. Its function is as follows. Catalyzes the hydrolysis of N(2)-succinylarginine into N(2)-succinylornithine, ammonia and CO(2). This chain is N-succinylarginine dihydrolase, found in Shewanella piezotolerans (strain WP3 / JCM 13877).